The sequence spans 266 residues: Segregation and condensation protein A (266 aa).

Belongs to the ScpA family. Component of a cohesin-like complex composed of ScpA, ScpB and the Smc homodimer, in which ScpA and ScpB bind to the head domain of Smc. The presence of the three proteins is required for the association of the complex with DNA.

It localises to the cytoplasm. In terms of biological role, participates in chromosomal partition during cell division. May act via the formation of a condensin-like complex containing Smc and ScpB that pull DNA away from mid-cell into both cell halves. The polypeptide is Segregation and condensation protein A (Coxiella burnetii (strain RSA 493 / Nine Mile phase I)).